The primary structure comprises 413 residues: Arginine biosynthesis bifunctional protein ArgJ 1 (413 aa).

Residues Thr-154, Lys-180, Thr-191, Glu-277, Asn-408, and Thr-413 each contribute to the substrate site. The active-site Nucleophile is the Thr-191.

It belongs to the ArgJ family. In terms of assembly, heterotetramer of two alpha and two beta chains.

Its subcellular location is the cytoplasm. It catalyses the reaction N(2)-acetyl-L-ornithine + L-glutamate = N-acetyl-L-glutamate + L-ornithine. The catalysed reaction is L-glutamate + acetyl-CoA = N-acetyl-L-glutamate + CoA + H(+). The protein operates within amino-acid biosynthesis; L-arginine biosynthesis; L-ornithine and N-acetyl-L-glutamate from L-glutamate and N(2)-acetyl-L-ornithine (cyclic): step 1/1. It participates in amino-acid biosynthesis; L-arginine biosynthesis; N(2)-acetyl-L-ornithine from L-glutamate: step 1/4. Its function is as follows. Catalyzes two activities which are involved in the cyclic version of arginine biosynthesis: the synthesis of N-acetylglutamate from glutamate and acetyl-CoA as the acetyl donor, and of ornithine by transacetylation between N(2)-acetylornithine and glutamate. The polypeptide is Arginine biosynthesis bifunctional protein ArgJ 1 (Nostoc sp. (strain PCC 7120 / SAG 25.82 / UTEX 2576)).